The chain runs to 86 residues: Cyclin-dependent kinase inhibitor 6 (86 aa).

Positions 1 to 15 (MAAAAATVTAVQPAA) are enriched in low complexity. The tract at residues 1-23 (MAAAAATVTAVQPAASSCGKRDG) is disordered.

It belongs to the CDI family. ICK/KRP subfamily.

This chain is Cyclin-dependent kinase inhibitor 6 (KRP6), found in Oryza sativa subsp. japonica (Rice).